An 859-amino-acid chain; its full sequence is Leucine--tRNA ligase (859 aa).

The short motif at 42 to 52 is the 'HIGH' region element; it reads PYPSGRLHMGH. A 'KMSKS' region motif is present at residues 618-622; that stretch reads KMSKS. Lys-621 serves as a coordination point for ATP.

This sequence belongs to the class-I aminoacyl-tRNA synthetase family.

It localises to the cytoplasm. The catalysed reaction is tRNA(Leu) + L-leucine + ATP = L-leucyl-tRNA(Leu) + AMP + diphosphate. This chain is Leucine--tRNA ligase, found in Shewanella putrefaciens (strain CN-32 / ATCC BAA-453).